Reading from the N-terminus, the 187-residue chain is UPF0200 protein APE_1753.1 (187 aa).

13–20 (GLPGSGKS) is an ATP binding site.

The protein belongs to the UPF0200 family.

The protein is UPF0200 protein APE_1753.1 of Aeropyrum pernix (strain ATCC 700893 / DSM 11879 / JCM 9820 / NBRC 100138 / K1).